Consider the following 967-residue polypeptide: Sarcosine oxidase subunit alpha (967 aa).

NAD(+) is bound by residues Ala141, Asp160, Glu161, Arg162, Ser168, Val207, Ala420, and Thr427. 2 residues coordinate (6R)-5,10-methylene-5,6,7,8-tetrahydrofolate: Thr694 and Glu786.

Belongs to the GcvT family. In terms of assembly, heterotetramer composed of subunits alpha (SoxA), beta (SoxB), gamma (SoxG) and delta (SoxD). It depends on NAD(+) as a cofactor.

It localises to the cytoplasm. The enzyme catalyses sarcosine + (6S)-5,6,7,8-tetrahydrofolate + O2 = (6R)-5,10-methylene-5,6,7,8-tetrahydrofolate + glycine + H2O2. The catalysed reaction is sarcosine + O2 + H2O = formaldehyde + glycine + H2O2. In terms of biological role, in the presence of tetrahydrofolate, catalyzes the oxidative demethylation of sarcosine to yield glycine, 5,10-methylenetetrahydrofolate and hydrogen peroxide. In the absence of tetrahydrofolate, catalyzes the oxidative demethylation of sarcosine to yield glycine, formaldehyde and hydrogen peroxide. The chain is Sarcosine oxidase subunit alpha from Corynebacterium sp. (strain P-1).